A 148-amino-acid chain; its full sequence is Iron/alpha-ketoglutarate-dependent dioxygenase ausU (148 aa).

Residues His45 and Asp47 each contribute to the Fe cation site.

It belongs to the PhyH family. In terms of assembly, homodimer. Fe cation serves as cofactor.

It functions in the pathway secondary metabolite biosynthesis; terpenoid biosynthesis. Its function is as follows. Iron/alpha-ketoglutarate-dependent dioxygenase; part of the gene cluster B that mediates the biosynthesis of austinol and dehydroaustinol, two fungal meroterpenoids. The first step of the pathway is the synthesis of 3,5-dimethylorsellinic acid by the polyketide synthase ausA. 3,5-dimethylorsellinic acid is then prenylated by the polyprenyl transferase ausN. Further epoxidation by the FAD-dependent monooxygenase ausM and cyclization by the probable terpene cyclase ausL lead to the formation of protoaustinoid A. Protoaustinoid A is then oxidized to spiro-lactone preaustinoid A3 by the combined action of the FAD-binding monooxygenases ausB and ausC, and the dioxygenase ausE. Acid-catalyzed keto-rearrangement and ring contraction of the tetraketide portion of preaustinoid A3 by ausJ lead to the formation of preaustinoid A4. The aldo-keto reductase ausK, with the help of ausH, is involved in the next step by transforming preaustinoid A4 into isoaustinone which is in turn hydroxylated by the P450 monooxygenase ausI to form austinolide. Finally, the cytochrome P450 monooxygenase ausG modifies austinolide to austinol. Austinol can be further modified to dehydroaustinol which forms a diffusible complex with diorcinol that initiates conidiation. Due to genetic rearrangements of the clusters and the subsequent loss of some enzymes, the end products of the Emericella nidulans austinoid biosynthesis clusters are austinol and dehydroaustinol, even if additional enzymes, such as the O-acetyltransferase ausQ and the cytochrome P450 monooxygenase ausR are still functional. In Emericella nidulans (strain FGSC A4 / ATCC 38163 / CBS 112.46 / NRRL 194 / M139) (Aspergillus nidulans), this protein is Iron/alpha-ketoglutarate-dependent dioxygenase ausU.